An 823-amino-acid polypeptide reads, in one-letter code: DNA topoisomerase 4 subunit A (823 aa).

The 467-residue stretch at 30-496 folds into the Topo IIA-type catalytic domain; the sequence is LPDIRDGLKP…KAIEIDTASL (467 aa). Y118 functions as the O-(5'-phospho-DNA)-tyrosine intermediate in the catalytic mechanism.

The protein belongs to the type II topoisomerase GyrA/ParC subunit family. ParC type 2 subfamily. In terms of assembly, heterotetramer composed of ParC and ParE.

Its subcellular location is the cell membrane. The catalysed reaction is ATP-dependent breakage, passage and rejoining of double-stranded DNA.. With respect to regulation, inhibited by quinolones, such as levofloxacin. Functionally, topoisomerase IV is essential for chromosome segregation. It relaxes supercoiled DNA. Performs the decatenation events required during the replication of a circular DNA molecule. This is DNA topoisomerase 4 subunit A from Streptococcus pneumoniae serotype 4 (strain ATCC BAA-334 / TIGR4).